Reading from the N-terminus, the 345-residue chain is Protein TRIGALACTOSYLDIACYLGLYCEROL 3, chloroplastic (345 aa).

The transit peptide at 1-46 (MLSLSCSSSSSSLLPPSLHYHGSSSVQSIVVPRRSLISFRRKVSCC) directs the protein to the chloroplast. An ABC transporter domain is found at 85–336 (IECRDVYKSF…TNPIVQQFAT (252 aa)). 117 to 124 (GPSGTGKS) provides a ligand contact to ATP.

The protein belongs to the ABC transporter superfamily. ABCI family. In terms of assembly, catalytic subunit of the TGD complex, a lipid translocator at the inner chloroplast envelope membrane made of TGD1, TGD2 and TGD3. Interacts with TGD1 and TGD2 with an overall subunit stoichiometry of 2 TGD1, 2 TGD3 and 8 to 12 TGD2. Interacts with TGD5.

It is found in the plastid. It localises to the chloroplast stroma. In terms of biological role, ATPase transporter involved in lipid transfer from the endoplasmic reticulum (ER) to plastids, and necessary for thylakoids formation. Not involved in transition metal transport pathways. In Arabidopsis thaliana (Mouse-ear cress), this protein is Protein TRIGALACTOSYLDIACYLGLYCEROL 3, chloroplastic.